Here is a 139-residue protein sequence, read N- to C-terminus: ATP synthase epsilon chain 2 (139 aa).

The protein belongs to the ATPase epsilon chain family. As to quaternary structure, F-type ATPases have 2 components, CF(1) - the catalytic core - and CF(0) - the membrane proton channel. CF(1) has five subunits: alpha(3), beta(3), gamma(1), delta(1), epsilon(1). CF(0) has three main subunits: a, b and c.

It localises to the cell inner membrane. Functionally, produces ATP from ADP in the presence of a proton gradient across the membrane. The sequence is that of ATP synthase epsilon chain 2 (atpC2) from Ralstonia nicotianae (strain ATCC BAA-1114 / GMI1000) (Ralstonia solanacearum).